Here is a 684-residue protein sequence, read N- to C-terminus: Glycine--tRNA ligase beta subunit (684 aa).

It belongs to the class-II aminoacyl-tRNA synthetase family. As to quaternary structure, tetramer of two alpha and two beta subunits.

Its subcellular location is the cytoplasm. It carries out the reaction tRNA(Gly) + glycine + ATP = glycyl-tRNA(Gly) + AMP + diphosphate. The chain is Glycine--tRNA ligase beta subunit from Pseudomonas entomophila (strain L48).